A 185-amino-acid polypeptide reads, in one-letter code: Ribosome-recycling factor (185 aa).

This sequence belongs to the RRF family.

The protein localises to the cytoplasm. Functionally, responsible for the release of ribosomes from messenger RNA at the termination of protein biosynthesis. May increase the efficiency of translation by recycling ribosomes from one round of translation to another. This Desulfosudis oleivorans (strain DSM 6200 / JCM 39069 / Hxd3) (Desulfococcus oleovorans) protein is Ribosome-recycling factor.